We begin with the raw amino-acid sequence, 284 residues long: Bifunctional protein FolD (284 aa).

NADP(+)-binding positions include 165 to 167, serine 190, and valine 231; that span reads GRS.

This sequence belongs to the tetrahydrofolate dehydrogenase/cyclohydrolase family. Homodimer.

It catalyses the reaction (6R)-5,10-methylene-5,6,7,8-tetrahydrofolate + NADP(+) = (6R)-5,10-methenyltetrahydrofolate + NADPH. The enzyme catalyses (6R)-5,10-methenyltetrahydrofolate + H2O = (6R)-10-formyltetrahydrofolate + H(+). It participates in one-carbon metabolism; tetrahydrofolate interconversion. Its function is as follows. Catalyzes the oxidation of 5,10-methylenetetrahydrofolate to 5,10-methenyltetrahydrofolate and then the hydrolysis of 5,10-methenyltetrahydrofolate to 10-formyltetrahydrofolate. The polypeptide is Bifunctional protein FolD (Ruminiclostridium cellulolyticum (strain ATCC 35319 / DSM 5812 / JCM 6584 / H10) (Clostridium cellulolyticum)).